Reading from the N-terminus, the 168-residue chain is Protein FAM163A (168 aa).

The helical transmembrane segment at 6–26 (VVITGGILATVILLCIIAVLC) threads the bilayer.

Belongs to the FAM163 family.

It is found in the membrane. This Mus musculus (Mouse) protein is Protein FAM163A (Fam163a).